We begin with the raw amino-acid sequence, 245 residues long: Eukaryotic translation initiation factor 3 subunit K (245 aa).

The region spanning 46–227 is the PCI domain; the sequence is YDCYANLALL…EAKGTVVREN (182 aa).

The protein belongs to the eIF-3 subunit K family. Component of the eukaryotic translation initiation factor 3 (eIF-3) complex.

It is found in the cytoplasm. Component of the eukaryotic translation initiation factor 3 (eIF-3) complex, which is involved in protein synthesis of a specialized repertoire of mRNAs and, together with other initiation factors, stimulates binding of mRNA and methionyl-tRNAi to the 40S ribosome. The eIF-3 complex specifically targets and initiates translation of a subset of mRNAs involved in cell proliferation. In Phaeosphaeria nodorum (strain SN15 / ATCC MYA-4574 / FGSC 10173) (Glume blotch fungus), this protein is Eukaryotic translation initiation factor 3 subunit K.